The sequence spans 437 residues: Glutamate-1-semialdehyde 2,1-aminomutase (437 aa).

Lys-273 bears the N6-(pyridoxal phosphate)lysine mark.

The protein belongs to the class-III pyridoxal-phosphate-dependent aminotransferase family. HemL subfamily. As to quaternary structure, homodimer. Pyridoxal 5'-phosphate is required as a cofactor.

It localises to the cytoplasm. It carries out the reaction (S)-4-amino-5-oxopentanoate = 5-aminolevulinate. It functions in the pathway porphyrin-containing compound metabolism; protoporphyrin-IX biosynthesis; 5-aminolevulinate from L-glutamyl-tRNA(Glu): step 2/2. The sequence is that of Glutamate-1-semialdehyde 2,1-aminomutase from Chlamydia caviae (strain ATCC VR-813 / DSM 19441 / 03DC25 / GPIC) (Chlamydophila caviae).